The primary structure comprises 321 residues: Mas-related G-protein coupled receptor member H (321 aa).

Over 1 to 35 the chain is Extracellular; it reads MEPLAMTLYPLESTQPTRNKTPNETTWSSEHTDDH. Asparagine 23 is a glycosylation site (N-linked (GlcNAc...) asparagine). Residues 36–56 form a helical membrane-spanning segment; the sequence is TYFLVSLVICSLGLAGNGLLI. Over 57–71 the chain is Cytoplasmic; it reads WFLIFCIKRKPFTIY. The helical transmembrane segment at 72–92 threads the bilayer; sequence ILHLAIADFMVLLCSSIMKLV. The Extracellular portion of the chain corresponds to 93–102; the sequence is NTFHIYNMTL. Asparagine 99 carries N-linked (GlcNAc...) asparagine glycosylation. A helical transmembrane segment spans residues 103–126; it reads ESYAILFMIFGYNTGLHLLTAISV. Residues 127–147 lie on the Cytoplasmic side of the membrane; sequence ERCLSVLYPIWYQCQRPKHQS. Residues 148 to 168 traverse the membrane as a helical segment; it reads AVACMLLWALSVLVSGLENFF. At 169–188 the chain is on the extracellular side; it reads CILEVKPQFPECRYVYIFSC. Residues 189–209 traverse the membrane as a helical segment; the sequence is ILTFLVFVPLMIFSNLILFIQ. At 210–225 the chain is on the cytoplasmic side; it reads VCCNLKPRQPTKLYVI. A helical transmembrane segment spans residues 226–246; the sequence is IMTTVILFLVFAMPMKVLLII. Residue glycine 247 is a topological domain, extracellular. Residues 248-271 traverse the membrane as a helical segment; the sequence is YYSSSLDDSVWDSLPYLNMLSTIN. Residues 272–320 lie on the Cytoplasmic side of the membrane; the sequence is CSINPIVYFVVGSLRRKRSRKSLKEALQKVFEEKPVVASRENVTQFSLP.

It belongs to the G-protein coupled receptor 1 family. Mas subfamily.

It localises to the cell membrane. Orphan receptor. May regulate nociceptor function and/or development, including the sensation or modulation of pain. The chain is Mas-related G-protein coupled receptor member H (Mrgprh) from Mus musculus (Mouse).